A 348-amino-acid polypeptide reads, in one-letter code: MKAVIADGQNGVEVISDAPKPTPEKGEFLGRVIRVAFNPIDWKTLYNASIEKGTVGGTDFVAVVEDVGEGVDRSKYIGATVSGWAPGPLDGSNAAWREYITLDVNLVYFVPKNITPSQAATLPLTFTTASQGLNQYLGLPLPPTDGSKNSAQQKWVLVWSGSSSVGQYVVQLAHHAGYKVIATCSPHNFDWIKKLGADFTVDYHDPNVVEIIKKATDDSVFYGFDAASFPETSTLAVKAFSSKVKDGKLINILSSPPSPRSEVKIIGIIDYSLFNREFNFFGNKIEPIQASYDHAVEVYKKLTGWLQEGVIIPNRVKEFDGGLQAIPKALREFASGKHSAVKFVVRID.

Belongs to the zinc-containing alcohol dehydrogenase family. Quinone oxidoreductase subfamily.

It localises to the mitochondrion. This Schizosaccharomyces pombe (strain 972 / ATCC 24843) (Fission yeast) protein is Zinc-type alcohol dehydrogenase-like protein C2E1P3.01.